Reading from the N-terminus, the 342-residue chain is Central glycolytic genes regulator (342 aa).

Residues 37 to 56 (RRNLAVSLGLTERVLRSEVT) constitute a DNA-binding region (H-T-H motif).

Belongs to the SorC transcriptional regulatory family. In terms of assembly, homotetramer.

In the absence of glucose, represses the transcription of the gapA operon, which encodes five key glycolytic enzymes. This chain is Central glycolytic genes regulator (cggR), found in Priestia megaterium (strain DSM 319 / IMG 1521) (Bacillus megaterium).